A 356-amino-acid chain; its full sequence is Branched-chain-amino-acid aminotransferase 6 (356 aa).

N6-(pyridoxal phosphate)lysine is present on Lys199.

This sequence belongs to the class-IV pyridoxal-phosphate-dependent aminotransferase family. The cofactor is pyridoxal 5'-phosphate.

The protein resides in the cytoplasm. It catalyses the reaction L-leucine + 2-oxoglutarate = 4-methyl-2-oxopentanoate + L-glutamate. The catalysed reaction is L-isoleucine + 2-oxoglutarate = (S)-3-methyl-2-oxopentanoate + L-glutamate. It carries out the reaction L-valine + 2-oxoglutarate = 3-methyl-2-oxobutanoate + L-glutamate. It participates in amino-acid biosynthesis; L-isoleucine biosynthesis; L-isoleucine from 2-oxobutanoate: step 4/4. It functions in the pathway amino-acid biosynthesis; L-leucine biosynthesis; L-leucine from 3-methyl-2-oxobutanoate: step 4/4. Its pathway is amino-acid biosynthesis; L-valine biosynthesis; L-valine from pyruvate: step 4/4. Functionally, converts 2-oxo acids to branched-chain amino acids. Acts on leucine, isoleucine and valine. The sequence is that of Branched-chain-amino-acid aminotransferase 6 (BCAT6) from Arabidopsis thaliana (Mouse-ear cress).